Consider the following 242-residue polypeptide: ATP synthase subunit a (242 aa).

The next 6 membrane-spanning stretches (helical) occupy residues 29 to 49 (SSIY…LAFY), 84 to 104 (FIPL…LGMT), 114 to 134 (IIVT…VGFV), 140 to 160 (FLTL…MIVI), 181 to 201 (MAGH…MIYL), and 203 to 223 (FLPI…AILQ).

This sequence belongs to the ATPase A chain family. As to quaternary structure, F-type ATPases have 2 components, CF(1) - the catalytic core - and CF(0) - the membrane proton channel. CF(1) has five subunits: alpha(3), beta(3), gamma(1), delta(1), epsilon(1). CF(0) has three main subunits: a(1), b(2) and c(9-12). The alpha and beta chains form an alternating ring which encloses part of the gamma chain. CF(1) is attached to CF(0) by a central stalk formed by the gamma and epsilon chains, while a peripheral stalk is formed by the delta and b chains.

Its subcellular location is the cell inner membrane. Functionally, key component of the proton channel; it plays a direct role in the translocation of protons across the membrane. This Rickettsia rickettsii (strain Sheila Smith) protein is ATP synthase subunit a.